An 80-amino-acid chain; its full sequence is UPF0270 protein ASA_3305 (80 aa).

Belongs to the UPF0270 family.

In Aeromonas salmonicida (strain A449), this protein is UPF0270 protein ASA_3305.